Consider the following 185-residue polypeptide: Elongation factor P (185 aa).

Belongs to the elongation factor P family.

The protein resides in the cytoplasm. It functions in the pathway protein biosynthesis; polypeptide chain elongation. In terms of biological role, involved in peptide bond synthesis. Stimulates efficient translation and peptide-bond synthesis on native or reconstituted 70S ribosomes in vitro. Probably functions indirectly by altering the affinity of the ribosome for aminoacyl-tRNA, thus increasing their reactivity as acceptors for peptidyl transferase. In Lactococcus lactis subsp. lactis (strain IL1403) (Streptococcus lactis), this protein is Elongation factor P (efp).